Reading from the N-terminus, the 753-residue chain is Synaptotagmin-like protein 5 (753 aa).

A RabBD domain is found at 7–123; sequence FINLSFLLDH…IISGEWFLEE (117 aa). Residues 64–106 form an FYVE-type zinc finger; it reads CVHCQKSLGLIFDRGAPCQACSLRVCSECRVTGLDGSWKCTVC. Disordered stretches follow at residues 145–188, 221–283, and 298–359; these read RRSP…GFLL, SFKS…GFEN, and TKSH…LNSL. Position 147 is a phosphoserine (Ser147). Low complexity predominate over residues 224–238; sequence SVSGSDRGSTTSSDL. Composition is skewed to polar residues over residues 260–275 and 305–316; these read TQRS…TSIS and TSGTPSIAVSGT. C2 domains are found at residues 429-550 and 590-717; these read VTGE…DEWF and PQGK…VDWM.

As to quaternary structure, binds RAB27A that has been activated by GTP-binding.

Its subcellular location is the membrane. In terms of biological role, may act as Rab effector protein and play a role in vesicle trafficking. Binds phospholipids. This is Synaptotagmin-like protein 5 (Sytl5) from Rattus norvegicus (Rat).